Consider the following 158-residue polypeptide: NAD(P)H-quinone oxidoreductase subunit J, chloroplastic (158 aa).

Belongs to the complex I 30 kDa subunit family. As to quaternary structure, NDH is composed of at least 16 different subunits, 5 of which are encoded in the nucleus.

Its subcellular location is the plastid. The protein localises to the chloroplast thylakoid membrane. The enzyme catalyses a plastoquinone + NADH + (n+1) H(+)(in) = a plastoquinol + NAD(+) + n H(+)(out). It carries out the reaction a plastoquinone + NADPH + (n+1) H(+)(in) = a plastoquinol + NADP(+) + n H(+)(out). In terms of biological role, NDH shuttles electrons from NAD(P)H:plastoquinone, via FMN and iron-sulfur (Fe-S) centers, to quinones in the photosynthetic chain and possibly in a chloroplast respiratory chain. The immediate electron acceptor for the enzyme in this species is believed to be plastoquinone. Couples the redox reaction to proton translocation, and thus conserves the redox energy in a proton gradient. In Chloranthus spicatus (Chulantree), this protein is NAD(P)H-quinone oxidoreductase subunit J, chloroplastic.